Here is a 353-residue protein sequence, read N- to C-terminus: Protein RecA (353 aa).

80 to 87 (GPESSGKT) is a binding site for ATP.

The protein belongs to the RecA family.

It is found in the cytoplasm. Functionally, can catalyze the hydrolysis of ATP in the presence of single-stranded DNA, the ATP-dependent uptake of single-stranded DNA by duplex DNA, and the ATP-dependent hybridization of homologous single-stranded DNAs. It interacts with LexA causing its activation and leading to its autocatalytic cleavage. The chain is Protein RecA from Chlorobium chlorochromatii (strain CaD3).